The sequence spans 69 residues: Small archaeal modifier protein 2 (69 aa).

Residue Lys55 forms a Glycyl lysine isopeptide (Lys-Gly) (interchain with G-Cter in SAMP2) linkage. The residue at position 69 (Gly69) is a 1-thioglycine; alternate. Glycyl adenylate; alternate is present on Gly69. Gly69 is covalently cross-linked (Glycyl lysine isopeptide (Gly-Lys) (interchain with K-? in acceptor proteins); alternate).

Post-translationally, the C-terminal glycine is likely acyl-adenylated (-COAMP) by UbaA, and also probably thiocarboxylated (-COSH) to function in sulfur transfer.

Its function is as follows. Functions as a protein modifier covalently attached to lysine residues of substrate proteins, as well as a sulfur carrier in tRNA thiolation. The protein modification process is termed sampylation and involves the formation of an isopeptide bond between the SAMP2 C-terminal glycine carboxylate and the epsilon-amino group of lysine residues on target proteins. Is able to form polymeric chains with itself likely at Lys-55, similar to ubiquitin and other ubiquitin-like proteins. May serve as a proteolytic signal in the cell to target proteins for degradation by proteasomes. This Pyrococcus furiosus (strain ATCC 43587 / DSM 3638 / JCM 8422 / Vc1) protein is Small archaeal modifier protein 2.